Here is a 128-residue protein sequence, read N- to C-terminus: Large ribosomal subunit protein bL17 (128 aa).

It belongs to the bacterial ribosomal protein bL17 family. Part of the 50S ribosomal subunit. Contacts protein L32.

The polypeptide is Large ribosomal subunit protein bL17 (Ehrlichia ruminantium (strain Gardel)).